The primary structure comprises 82 residues: U10-myrmicitoxin-Mri1c (82 aa).

The first 26 residues, 1–26 (MRLSYVSLTLAIIFVMAIVHAPETEA), serve as a signal peptide directing secretion. Positions 27–52 (KAYPEADAVGEASAVGEADAVGVADP) are excised as a propeptide. Ile-81 bears the Isoleucine amide mark.

This sequence belongs to the formicidae venom precursor-01 superfamily. Expressed by the venom gland.

It is found in the secreted. Induces paralysis 5 minutes after injection into blowflies (L.caesar). In most cases is not lethal 24 hours after injection, but paralysis is irreversible. May have antimicrobial properties, like most ant linear peptides. The protein is U10-myrmicitoxin-Mri1c of Manica rubida (European giant red ant).